The following is a 432-amino-acid chain: 3-phosphoshikimate 1-carboxyvinyltransferase (432 aa).

3-phosphoshikimate contacts are provided by Lys23, Ser24, and Arg28. Lys23 serves as a coordination point for phosphoenolpyruvate. Positions 95 and 123 each coordinate phosphoenolpyruvate. Residues Ser167, Gln169, Asp317, and Lys344 each coordinate 3-phosphoshikimate. Gln169 is a phosphoenolpyruvate binding site. Asp317 functions as the Proton acceptor in the catalytic mechanism. Arg348 and Arg390 together coordinate phosphoenolpyruvate.

This sequence belongs to the EPSP synthase family. Monomer.

The protein resides in the cytoplasm. It carries out the reaction 3-phosphoshikimate + phosphoenolpyruvate = 5-O-(1-carboxyvinyl)-3-phosphoshikimate + phosphate. It participates in metabolic intermediate biosynthesis; chorismate biosynthesis; chorismate from D-erythrose 4-phosphate and phosphoenolpyruvate: step 6/7. In terms of biological role, catalyzes the transfer of the enolpyruvyl moiety of phosphoenolpyruvate (PEP) to the 5-hydroxyl of shikimate-3-phosphate (S3P) to produce enolpyruvyl shikimate-3-phosphate and inorganic phosphate. This Staphylococcus aureus (strain bovine RF122 / ET3-1) protein is 3-phosphoshikimate 1-carboxyvinyltransferase.